A 306-amino-acid chain; its full sequence is Ornithine carbamoyltransferase (306 aa).

Carbamoyl phosphate is bound by residues 54-57 (STRT), Q81, R105, and 132-135 (HPLQ). Residues N162, D226, and 230-231 (SM) each bind L-ornithine. Residues 266–267 (CL) and R294 each bind carbamoyl phosphate.

It belongs to the aspartate/ornithine carbamoyltransferase superfamily. OTCase family.

The protein resides in the cytoplasm. The catalysed reaction is carbamoyl phosphate + L-ornithine = L-citrulline + phosphate + H(+). It functions in the pathway amino-acid biosynthesis; L-arginine biosynthesis; L-arginine from L-ornithine and carbamoyl phosphate: step 1/3. Functionally, reversibly catalyzes the transfer of the carbamoyl group from carbamoyl phosphate (CP) to the N(epsilon) atom of ornithine (ORN) to produce L-citrulline. This Sulfurisphaera tokodaii (strain DSM 16993 / JCM 10545 / NBRC 100140 / 7) (Sulfolobus tokodaii) protein is Ornithine carbamoyltransferase.